A 135-amino-acid chain; its full sequence is ATP synthase epsilon chain (135 aa).

It belongs to the ATPase epsilon chain family. As to quaternary structure, F-type ATPases have 2 components, CF(1) - the catalytic core - and CF(0) - the membrane proton channel. CF(1) has five subunits: alpha(3), beta(3), gamma(1), delta(1), epsilon(1). CF(0) has three main subunits: a, b and c.

It is found in the cell inner membrane. Its function is as follows. Produces ATP from ADP in the presence of a proton gradient across the membrane. This is ATP synthase epsilon chain from Rhodopseudomonas palustris (strain BisA53).